A 144-amino-acid polypeptide reads, in one-letter code: Large ribosomal subunit protein uL13 (144 aa).

The protein belongs to the universal ribosomal protein uL13 family. As to quaternary structure, part of the 50S ribosomal subunit.

In terms of biological role, this protein is one of the early assembly proteins of the 50S ribosomal subunit, although it is not seen to bind rRNA by itself. It is important during the early stages of 50S assembly. The polypeptide is Large ribosomal subunit protein uL13 (Clostridium perfringens (strain ATCC 13124 / DSM 756 / JCM 1290 / NCIMB 6125 / NCTC 8237 / Type A)).